The sequence spans 1371 residues: DNA-directed RNA polymerase subunit beta (1371 aa).

Belongs to the RNA polymerase beta chain family. The RNAP catalytic core consists of 2 alpha, 1 beta, 1 beta' and 1 omega subunit. When a sigma factor is associated with the core the holoenzyme is formed, which can initiate transcription.

It catalyses the reaction RNA(n) + a ribonucleoside 5'-triphosphate = RNA(n+1) + diphosphate. Functionally, DNA-dependent RNA polymerase catalyzes the transcription of DNA into RNA using the four ribonucleoside triphosphates as substrates. The sequence is that of DNA-directed RNA polymerase subunit beta from Geobacter sp. (strain M21).